We begin with the raw amino-acid sequence, 392 residues long: Protein NolC (392 aa).

Residues 2 to 71 enclose the J domain; sequence KRDLYETLGV…RAAYDRYGHA (70 aa). Disordered regions lie at residues 103-142 and 157-244; these read RRDDGRRSSAPLLGRSRTRCGPSLQHGDHPRGGLFRQDGA and LGRE…TGLR. Residues 157-170 show a composition bias toward basic and acidic residues; the sequence is LGREAGHQPEDLRH. The span at 171-185 shows a compositional bias: low complexity; sequence LPGLRPYPRRPGLLL. Residues 186 to 203 are compositionally biased toward basic and acidic residues; that stretch reads DRTHLPDLRRSRSDDHRS. A compositionally biased stretch (basic residues) spans 227-241; it reads HRGRHAYPPLRRGRT.

This Rhizobium fredii (Sinorhizobium fredii) protein is Protein NolC (nolC).